Consider the following 342-residue polypeptide: Aspartate carbamoyltransferase catalytic subunit (342 aa).

Residues arginine 59 and threonine 60 each coordinate carbamoyl phosphate. Lysine 87 is a binding site for L-aspartate. Residues arginine 109, histidine 142, and glutamine 145 each coordinate carbamoyl phosphate. Residues arginine 182 and arginine 253 each contribute to the L-aspartate site. Residues glycine 294 and proline 295 each coordinate carbamoyl phosphate.

It belongs to the aspartate/ornithine carbamoyltransferase superfamily. ATCase family. Heterododecamer (2C3:3R2) of six catalytic PyrB chains organized as two trimers (C3), and six regulatory PyrI chains organized as three dimers (R2).

The enzyme catalyses carbamoyl phosphate + L-aspartate = N-carbamoyl-L-aspartate + phosphate + H(+). It functions in the pathway pyrimidine metabolism; UMP biosynthesis via de novo pathway; (S)-dihydroorotate from bicarbonate: step 2/3. Catalyzes the condensation of carbamoyl phosphate and aspartate to form carbamoyl aspartate and inorganic phosphate, the committed step in the de novo pyrimidine nucleotide biosynthesis pathway. The protein is Aspartate carbamoyltransferase catalytic subunit of Synechococcus sp. (strain WH7803).